A 251-amino-acid chain; its full sequence is uncharacterized protein (251 aa).

Residues 3 to 58 (TPERHQLIIDQIEKHDVVKIQELINLTNASESTIRRDLSTLEERGFLKRVHGGAAK) form the HTH deoR-type domain. Positions 20-39 (VKIQELINLTNASESTIRRD) form a DNA-binding region, H-T-H motif.

This is an uncharacterized protein from Bacillus subtilis (strain 168).